A 284-amino-acid polypeptide reads, in one-letter code: tRNA dimethylallyltransferase (284 aa).

6–13 (GPTASGKS) contributes to the ATP binding site. Residue 8–13 (TASGKS) coordinates substrate. The interval 31–34 (DSLS) is interaction with substrate tRNA.

It belongs to the IPP transferase family. In terms of assembly, monomer. Mg(2+) serves as cofactor.

It carries out the reaction adenosine(37) in tRNA + dimethylallyl diphosphate = N(6)-dimethylallyladenosine(37) in tRNA + diphosphate. In terms of biological role, catalyzes the transfer of a dimethylallyl group onto the adenine at position 37 in tRNAs that read codons beginning with uridine, leading to the formation of N6-(dimethylallyl)adenosine (i(6)A). In Nautilia profundicola (strain ATCC BAA-1463 / DSM 18972 / AmH), this protein is tRNA dimethylallyltransferase.